Reading from the N-terminus, the 396-residue chain is Exodeoxyribonuclease 7 large subunit (396 aa).

It belongs to the XseA family. Heterooligomer composed of large and small subunits.

It localises to the cytoplasm. The enzyme catalyses Exonucleolytic cleavage in either 5'- to 3'- or 3'- to 5'-direction to yield nucleoside 5'-phosphates.. In terms of biological role, bidirectionally degrades single-stranded DNA into large acid-insoluble oligonucleotides, which are then degraded further into small acid-soluble oligonucleotides. The sequence is that of Exodeoxyribonuclease 7 large subunit from Clostridium tetani (strain Massachusetts / E88).